The primary structure comprises 283 residues: Putative sugar uptake protein BA_0200/GBAA_0200/BAS0200 (283 aa).

The next 10 helical transmembrane spans lie at 4 to 21 (LLAL…LVSV), 26 to 48 (GAYS…MYVF), 52 to 71 (ALTM…WALG), 84 to 106 (VSTT…GVIA), 110 to 132 (WTTT…GVVF), 151 to 173 (LLTL…WYNI), 178 to 195 (AILP…VLTS), 208 to 230 (ALSG…RVGV), 234 to 253 (FPLS…VFLG), and 260 to 279 (QLIF…VLLG).

It belongs to the GRP transporter (TC 2.A.7.5) family.

Its subcellular location is the cell membrane. This is Putative sugar uptake protein BA_0200/GBAA_0200/BAS0200 from Bacillus anthracis.